Here is a 404-residue protein sequence, read N- to C-terminus: Probable tRNA sulfurtransferase (404 aa).

The region spanning 60 to 165 (QPVAESLKQI…EEAAYISYET (106 aa)) is the THUMP domain. ATP contacts are provided by residues 183 to 184 (ML), 208 to 209 (HF), Arg-265, Gly-287, and Gln-296.

It belongs to the ThiI family.

It localises to the cytoplasm. It catalyses the reaction [ThiI sulfur-carrier protein]-S-sulfanyl-L-cysteine + a uridine in tRNA + 2 reduced [2Fe-2S]-[ferredoxin] + ATP + H(+) = [ThiI sulfur-carrier protein]-L-cysteine + a 4-thiouridine in tRNA + 2 oxidized [2Fe-2S]-[ferredoxin] + AMP + diphosphate. It carries out the reaction [ThiS sulfur-carrier protein]-C-terminal Gly-Gly-AMP + S-sulfanyl-L-cysteinyl-[cysteine desulfurase] + AH2 = [ThiS sulfur-carrier protein]-C-terminal-Gly-aminoethanethioate + L-cysteinyl-[cysteine desulfurase] + A + AMP + 2 H(+). It participates in cofactor biosynthesis; thiamine diphosphate biosynthesis. Catalyzes the ATP-dependent transfer of a sulfur to tRNA to produce 4-thiouridine in position 8 of tRNAs, which functions as a near-UV photosensor. Also catalyzes the transfer of sulfur to the sulfur carrier protein ThiS, forming ThiS-thiocarboxylate. This is a step in the synthesis of thiazole, in the thiamine biosynthesis pathway. The sulfur is donated as persulfide by IscS. This is Probable tRNA sulfurtransferase from Streptococcus sanguinis (strain SK36).